The sequence spans 89 residues: Small ribosomal subunit protein uS15 (89 aa).

It belongs to the universal ribosomal protein uS15 family. In terms of assembly, part of the 30S ribosomal subunit. Forms a bridge to the 50S subunit in the 70S ribosome, contacting the 23S rRNA.

One of the primary rRNA binding proteins, it binds directly to 16S rRNA where it helps nucleate assembly of the platform of the 30S subunit by binding and bridging several RNA helices of the 16S rRNA. Its function is as follows. Forms an intersubunit bridge (bridge B4) with the 23S rRNA of the 50S subunit in the ribosome. This Roseiflexus sp. (strain RS-1) protein is Small ribosomal subunit protein uS15.